Reading from the N-terminus, the 205-residue chain is uncharacterized protein (205 aa).

Residues 10–75 adopt a coiled-coil conformation; the sequence is QDLLSAVDQQ…AANLMTVMTD (66 aa). Residues 108 to 141 are disordered; it reads MPLPSSNTNNDQTSPPASGKTSETPKKNPTNAMF. Over residues 111-141 the composition is skewed to polar residues; it reads PSSNTNNDQTSPPASGKTSETPKKNPTNAMF.

This sequence belongs to the asfivirus K205R family.

It is found in the host cytoplasm. Induces host endoplasmic reticulum stress and consequently activates autophagy and NF-kappa-B signaling pathway. In turn, may induce autophagy-mediated STING1 degradation and innate immune evasion. This is an uncharacterized protein from Ornithodoros (relapsing fever ticks).